A 577-amino-acid polypeptide reads, in one-letter code: Laccase-17 (577 aa).

The first 22 residues, 1 to 22 (MALQLLLAVFSCVLLLPQPAFG), serve as a signal peptide directing secretion. 2 Plastocyanin-like domains span residues 30–146 (EIKM…PKRG) and 156–309 (KEVP…YEPP). 2 N-linked (GlcNAc...) asparagine glycosylation sites follow: asparagine 35 and asparagine 76. Cu cation is bound by residues histidine 80 and histidine 82. N-linked (GlcNAc...) asparagine glycosylation is present at asparagine 112. Histidine 125 and histidine 127 together coordinate Cu cation. Residues asparagine 185, asparagine 201, asparagine 237, asparagine 297, asparagine 335, asparagine 383, asparagine 391, asparagine 401, asparagine 437, asparagine 444, asparagine 450, and asparagine 460 are each glycosylated (N-linked (GlcNAc...) asparagine). The Plastocyanin-like 3 domain maps to 427–561 (KFPWSPIVPF…RMAWLVLDGD (135 aa)). Histidine 478, histidine 481, histidine 483, histidine 540, cysteine 541, histidine 542, and histidine 546 together coordinate Cu cation.

This sequence belongs to the multicopper oxidase family. It depends on Cu cation as a cofactor. In terms of tissue distribution, ubiquitous with higher levels in the inflorescence stem.

It localises to the secreted. Its subcellular location is the extracellular space. The protein localises to the apoplast. It catalyses the reaction 4 hydroquinone + O2 = 4 benzosemiquinone + 2 H2O. In terms of biological role, lignin degradation and detoxification of lignin-derived products. This chain is Laccase-17 (LAC17), found in Arabidopsis thaliana (Mouse-ear cress).